The chain runs to 377 residues: Glutamate 5-kinase (377 aa).

An ATP-binding site is contributed by lysine 22. Substrate contacts are provided by serine 62, aspartate 149, and asparagine 161. ATP is bound by residues threonine 181–aspartate 182 and threonine 223–lysine 229. A PUA domain is found at glutamine 285 to phenylalanine 359.

It belongs to the glutamate 5-kinase family.

The protein resides in the cytoplasm. It carries out the reaction L-glutamate + ATP = L-glutamyl 5-phosphate + ADP. Its pathway is amino-acid biosynthesis; L-proline biosynthesis; L-glutamate 5-semialdehyde from L-glutamate: step 1/2. In terms of biological role, catalyzes the transfer of a phosphate group to glutamate to form L-glutamate 5-phosphate. The protein is Glutamate 5-kinase of Bifidobacterium adolescentis (strain ATCC 15703 / DSM 20083 / NCTC 11814 / E194a).